A 160-amino-acid chain; its full sequence is Cyanate hydratase (160 aa).

Active-site residues include Arg-100, Glu-103, and Ser-126.

The protein belongs to the cyanase family.

The enzyme catalyses cyanate + hydrogencarbonate + 3 H(+) = NH4(+) + 2 CO2. Functionally, catalyzes the reaction of cyanate with bicarbonate to produce ammonia and carbon dioxide. This chain is Cyanate hydratase, found in Neosartorya fischeri (strain ATCC 1020 / DSM 3700 / CBS 544.65 / FGSC A1164 / JCM 1740 / NRRL 181 / WB 181) (Aspergillus fischerianus).